Reading from the N-terminus, the 304-residue chain is Fluoroacetate dehalogenase (304 aa).

One can recognise an AB hydrolase-1 domain in the interval 26 to 151; sequence PALLLLHGFP…FVARAYWHWY (126 aa). Catalysis depends on Asp104, which acts as the Nucleophile. 5 residues coordinate fluoroacetate: Arg105, Arg108, His149, Trp150, and Tyr212. His271 (proton acceptor) is an active-site residue.

This sequence belongs to the AB hydrolase superfamily. Epoxide hydrolase family. In terms of assembly, homodimer.

The catalysed reaction is a haloacetate + H2O = a halide anion + glycolate + H(+). The enzyme catalyses fluoroacetate + H2O = fluoride + glycolate + H(+). In terms of biological role, catalyzes the hydrolytic defluorination of fluoroacetate to produce glycolate. Has only very low activity towards chloroacetate and bromoacetate. This Burkholderia sp protein is Fluoroacetate dehalogenase (fac-dex).